The sequence spans 742 residues: Potassium transporter 19 (742 aa).

Residues M1–Q46 are Cytoplasmic-facing. Residues L47–Y67 traverse the membrane as a helical segment. Topologically, residues S68–G83 are extracellular. The chain crosses the membrane as a helical span at residues V84–V104. Residues L105–K170 lie on the Cytoplasmic side of the membrane. A helical membrane pass occupies residues I171–T191. At P192 to K206 the chain is on the extracellular side. Residues A207–F227 form a helical membrane-spanning segment. Topologically, residues S228–K236 are cytoplasmic. Residues V237–M257 form a helical membrane-spanning segment. At Y258–A287 the chain is on the extracellular side. N-linked (GlcNAc...) asparagine glycosylation occurs at N259. Residues W288 to L308 traverse the membrane as a helical segment. Topologically, residues G309–Q317 are cytoplasmic. The helical transmembrane segment at L318–Y338 threads the bilayer. Topologically, residues L339 to R352 are extracellular. A helical transmembrane segment spans residues S353 to A373. At S374 to Q409 the chain is on the cytoplasmic side. A helical membrane pass occupies residues V410–F430. The Extracellular segment spans residues Q431–G441. A helical transmembrane segment spans residues I442–I462. Topologically, residues W463–P468 are cytoplasmic. Residues F469–L489 traverse the membrane as a helical segment. At S490–G495 the chain is on the extracellular side. Residues G496–V516 form a helical membrane-spanning segment. At H517–I742 the chain is on the cytoplasmic side.

The protein belongs to the HAK/KUP transporter (TC 2.A.72.3) family.

Its subcellular location is the membrane. Its function is as follows. High-affinity potassium transporter. The chain is Potassium transporter 19 (HAK19) from Oryza sativa subsp. japonica (Rice).